A 279-amino-acid chain; its full sequence is Acetyl-coenzyme A carboxylase carboxyl transferase subunit beta (279 aa).

The CoA carboxyltransferase N-terminal domain maps to 23-279 (LWWKCEECGA…IVRLAGMLKV (257 aa)). The Zn(2+) site is built by Cys27, Cys30, Cys46, and Cys49. The C4-type zinc-finger motif lies at 27–49 (CEECGAMIHKKQLEDHVYTCSDC).

This sequence belongs to the AccD/PCCB family. As to quaternary structure, acetyl-CoA carboxylase is a heterohexamer composed of biotin carboxyl carrier protein (AccB), biotin carboxylase (AccC) and two subunits each of ACCase subunit alpha (AccA) and ACCase subunit beta (AccD). Requires Zn(2+) as cofactor.

It is found in the cytoplasm. The enzyme catalyses N(6)-carboxybiotinyl-L-lysyl-[protein] + acetyl-CoA = N(6)-biotinyl-L-lysyl-[protein] + malonyl-CoA. It participates in lipid metabolism; malonyl-CoA biosynthesis; malonyl-CoA from acetyl-CoA: step 1/1. Functionally, component of the acetyl coenzyme A carboxylase (ACC) complex. Biotin carboxylase (BC) catalyzes the carboxylation of biotin on its carrier protein (BCCP) and then the CO(2) group is transferred by the transcarboxylase to acetyl-CoA to form malonyl-CoA. The polypeptide is Acetyl-coenzyme A carboxylase carboxyl transferase subunit beta (Chlorobium limicola (strain DSM 245 / NBRC 103803 / 6330)).